Here is a 211-residue protein sequence, read N- to C-terminus: Ceramide-1-phosphate transfer protein (211 aa).

Residues Asp53, Lys57, Arg103, Arg107, and His147 each coordinate an N-acylsphingoid base 1-phosphate.

It belongs to the GLTP family.

It localises to the cytoplasm. It is found in the cytosol. Its subcellular location is the golgi apparatus. The protein localises to the trans-Golgi network membrane. The protein resides in the cell membrane. It localises to the endosome membrane. It is found in the nucleus outer membrane. The catalysed reaction is N-(hexadecanoyl)-sphing-4-enine-1-phosphate(in) = N-(hexadecanoyl)-sphing-4-enine-1-phosphate(out). It carries out the reaction N-(9Z-octadecenoyl)-sphing-4-enine-1-phosphate(in) = N-(9Z-octadecenoyl)-sphing-4-enine-1-phosphate(out). Functionally, mediates the intracellular transfer of ceramide-1-phosphate (C1P) between organelle membranes and the cell membrane. Required for normal structure of the Golgi stacks. Can bind phosphoceramides with a variety of aliphatic chains, but has a preference for lipids with saturated C16:0 or monounsaturated C18:1 aliphatic chains, and is inefficient with phosphoceramides containing lignoceryl (C24:0). Plays a role in the regulation of the cellular levels of ceramide-1-phosphate, and thereby contributes to the regulation of phospholipase PLA2G4A activity and the release of arachidonic acid. Has no activity with galactosylceramide, lactosylceramide, sphingomyelin, phosphatidylcholine, phosphatidic acid and ceramide. C1P transfer is stimulated by phosphatidylserine in C1P source vesicles. Regulates autophagy and pyroptosis, but not apoptosis. This chain is Ceramide-1-phosphate transfer protein (cptp), found in Danio rerio (Zebrafish).